Here is a 266-residue protein sequence, read N- to C-terminus: Energy-coupling factor transporter ATP-binding protein EcfA1 (266 aa).

Positions 2–237 (IKLNNVTFRY…EKIIEIAKIA (236 aa)) constitute an ABC transporter domain. ATP is bound at residue 37–44 (GHNGSGKS).

It belongs to the ABC transporter superfamily. Energy-coupling factor EcfA family. In terms of assembly, forms a stable energy-coupling factor (ECF) transporter complex composed of 2 membrane-embedded substrate-binding proteins (S component), 2 ATP-binding proteins (A component) and 2 transmembrane proteins (T component).

The protein resides in the cell membrane. ATP-binding (A) component of a common energy-coupling factor (ECF) ABC-transporter complex. Unlike classic ABC transporters this ECF transporter provides the energy necessary to transport a number of different substrates. In Mycoplasmopsis synoviae (strain 53) (Mycoplasma synoviae), this protein is Energy-coupling factor transporter ATP-binding protein EcfA1.